A 338-amino-acid chain; its full sequence is Uroporphyrinogen decarboxylase (338 aa).

Substrate is bound by residues 27–31, aspartate 77, tyrosine 151, serine 203, and histidine 317; that span reads RQAGR.

The protein belongs to the uroporphyrinogen decarboxylase family. Homodimer.

The protein localises to the cytoplasm. The catalysed reaction is uroporphyrinogen III + 4 H(+) = coproporphyrinogen III + 4 CO2. The protein operates within porphyrin-containing compound metabolism; protoporphyrin-IX biosynthesis; coproporphyrinogen-III from 5-aminolevulinate: step 4/4. Functionally, catalyzes the decarboxylation of four acetate groups of uroporphyrinogen-III to yield coproporphyrinogen-III. The chain is Uroporphyrinogen decarboxylase from Wolbachia sp. subsp. Drosophila simulans (strain wRi).